The chain runs to 436 residues: GTPase Der (436 aa).

2 consecutive EngA-type G domains span residues 3–167 (NIVA…PIKP) and 177–352 (PRFA…ENRQ). Residues 9–16 (GRPNVGKS), 56–60 (DTGGY), 119–122 (NKVD), 183–190 (GRPNAGKS), 230–234 (DTAGI), and 295–298 (NKWD) contribute to the GTP site. The KH-like domain occupies 353–436 (QRISTSKFNE…VPIDIYIREK (84 aa)).

Belongs to the TRAFAC class TrmE-Era-EngA-EngB-Septin-like GTPase superfamily. EngA (Der) GTPase family. In terms of assembly, associates with the 50S ribosomal subunit.

Its function is as follows. GTPase that plays an essential role in the late steps of ribosome biogenesis. The sequence is that of GTPase Der from Flavobacterium psychrophilum (strain ATCC 49511 / DSM 21280 / CIP 103535 / JIP02/86).